Reading from the N-terminus, the 605-residue chain is Pyruvate decarboxylase 2 (605 aa).

Residues aspartate 68 and histidine 155 each contribute to the substrate site. Positions 433–515 (DSWFNCQKLK…FLINNGGYTI (83 aa)) are thiamine pyrophosphate binding. Mg(2+) is bound by residues aspartate 483, asparagine 510, and glycine 512. Glutamate 516 is a substrate binding site.

Belongs to the TPP enzyme family. Homotetramer. A metal cation is required as a cofactor. The cofactor is thiamine diphosphate.

The catalysed reaction is a 2-oxocarboxylate + H(+) = an aldehyde + CO2. This is Pyruvate decarboxylase 2 (PDC2) from Oryza sativa subsp. japonica (Rice).